The sequence spans 202 residues: dTTP/UTP pyrophosphatase (202 aa).

Catalysis depends on Asp83, which acts as the Proton acceptor.

The protein belongs to the Maf family. YhdE subfamily. It depends on a divalent metal cation as a cofactor.

The protein resides in the cytoplasm. It catalyses the reaction dTTP + H2O = dTMP + diphosphate + H(+). It carries out the reaction UTP + H2O = UMP + diphosphate + H(+). Functionally, nucleoside triphosphate pyrophosphatase that hydrolyzes dTTP and UTP. May have a dual role in cell division arrest and in preventing the incorporation of modified nucleotides into cellular nucleic acids. This Polaromonas sp. (strain JS666 / ATCC BAA-500) protein is dTTP/UTP pyrophosphatase.